The chain runs to 291 residues: 4-diphosphocytidyl-2-C-methyl-D-erythritol kinase (291 aa).

The active site involves K12. 95 to 105 (PDGGGLGGGSS) is an ATP binding site. D137 is an active-site residue.

Belongs to the GHMP kinase family. IspE subfamily.

The catalysed reaction is 4-CDP-2-C-methyl-D-erythritol + ATP = 4-CDP-2-C-methyl-D-erythritol 2-phosphate + ADP + H(+). It participates in isoprenoid biosynthesis; isopentenyl diphosphate biosynthesis via DXP pathway; isopentenyl diphosphate from 1-deoxy-D-xylulose 5-phosphate: step 3/6. In terms of biological role, catalyzes the phosphorylation of the position 2 hydroxy group of 4-diphosphocytidyl-2C-methyl-D-erythritol. The polypeptide is 4-diphosphocytidyl-2-C-methyl-D-erythritol kinase (Alkalilimnicola ehrlichii (strain ATCC BAA-1101 / DSM 17681 / MLHE-1)).